The primary structure comprises 361 residues: Chorismate synthase (361 aa).

R48 and R54 together coordinate NADP(+). Residues 125 to 127 (RSS), 238 to 239 (NA), G278, 293 to 297 (KPTSS), and R319 contribute to the FMN site.

The protein belongs to the chorismate synthase family. In terms of assembly, homotetramer. FMNH2 is required as a cofactor.

The catalysed reaction is 5-O-(1-carboxyvinyl)-3-phosphoshikimate = chorismate + phosphate. Its pathway is metabolic intermediate biosynthesis; chorismate biosynthesis; chorismate from D-erythrose 4-phosphate and phosphoenolpyruvate: step 7/7. Functionally, catalyzes the anti-1,4-elimination of the C-3 phosphate and the C-6 proR hydrogen from 5-enolpyruvylshikimate-3-phosphate (EPSP) to yield chorismate, which is the branch point compound that serves as the starting substrate for the three terminal pathways of aromatic amino acid biosynthesis. This reaction introduces a second double bond into the aromatic ring system. The polypeptide is Chorismate synthase (Escherichia coli O139:H28 (strain E24377A / ETEC)).